We begin with the raw amino-acid sequence, 199 residues long: Ribonuclease P protein subunit p25 (199 aa).

Basic and acidic residues predominate over residues 1–11; the sequence is MENFRKVRSEE. Disordered stretches follow at residues 1 to 31 and 146 to 199; these read MENF…FADL and PRQL…DRTA. S172 is subject to Phosphoserine. The span at 190–199 shows a compositional bias: acidic residues; it reads PEAENEDRTA.

Belongs to the histone-like Alba family. In terms of assembly, component of nuclear RNase P and RNase MRP ribonucleoproteins. RNase P consists of a catalytic RNA moiety and 10 different protein chains; POP1, POP4, POP5, POP7, RPP14, RPP21, RPP25, RPP30, RPP38 and RPP40. Within the RNase P complex, POP1, POP7 and RPP25 form the 'finger' subcomplex, POP5, RPP14, RPP40 and homodimeric RPP30 form the 'palm' subcomplex, and RPP21, POP4 and RPP38 form the 'wrist' subcomplex. All subunits of the RNase P complex interact with the catalytic RNA. Several subunits of RNase P are also part of the RNase MRP complex. RNase MRP consists of a catalytic RNA moiety and about 8 protein subunits; POP1, POP7, RPP25, RPP30, RPP38, RPP40 and possibly also POP4 and POP5. POP7 forms a heterodimer with RPP25 that binds to the P3 stem loop of the catalytic RNA.

It is found in the nucleus. Its subcellular location is the nucleolus. Its function is as follows. Component of ribonuclease P, a ribonucleoprotein complex that generates mature tRNA molecules by cleaving their 5'-ends. Also a component of the MRP ribonuclease complex, which cleaves pre-rRNA sequences. This is Ribonuclease P protein subunit p25 (Rpp25) from Rattus norvegicus (Rat).